The primary structure comprises 132 residues: Secreted RxLR effector protein BLR08 (132 aa).

The first 22 residues, 1–22 (MRHKCLLAMAVVASMAFYSVIS), serve as a signal peptide directing secretion. Asn-25 carries an N-linked (GlcNAc...) asparagine glycan. Positions 36 to 57 (NRRLRPRVEPTANELDKQSDVD) are disordered. The RxLR-dEER signature appears at 37–83 (RRLRPRVEPTANELDKQSDVDTKLEADRRLGYPGESGFMLEGELEER). Residues 111–131 (FFLGLFASVIGVSIISACYGI) traverse the membrane as a helical segment.

The protein belongs to the RxLR effector family. Interacts with host transcription factor NAC069.

It localises to the secreted. The protein localises to the host endoplasmic reticulum membrane. Its function is as follows. Secreted effector that inhibits stress-induced relocalization of the transcription factor NAC069 to the nucleus, thus affecting its broad role in abiotic and biotic stress responses. The protein is Secreted RxLR effector protein BLR08 of Bremia lactucae (Lettuce downy mildew).